The sequence spans 121 residues: Large ribosomal subunit protein bL12 (121 aa).

Belongs to the bacterial ribosomal protein bL12 family. As to quaternary structure, homodimer. Part of the ribosomal stalk of the 50S ribosomal subunit. Forms a multimeric L10(L12)X complex, where L10 forms an elongated spine to which 2 to 4 L12 dimers bind in a sequential fashion. Binds GTP-bound translation factors.

In terms of biological role, forms part of the ribosomal stalk which helps the ribosome interact with GTP-bound translation factors. Is thus essential for accurate translation. The sequence is that of Large ribosomal subunit protein bL12 from Pseudomonas fluorescens (strain SBW25).